A 360-amino-acid chain; its full sequence is Peptide chain release factor 1 (360 aa).

An N5-methylglutamine modification is found at Gln235. Residues 284 to 313 (AKRQQAEASTRRNLLGSGDRSDRNRTYNFP) form a disordered region.

The protein belongs to the prokaryotic/mitochondrial release factor family. Post-translationally, methylated by PrmC. Methylation increases the termination efficiency of RF1.

It localises to the cytoplasm. Its function is as follows. Peptide chain release factor 1 directs the termination of translation in response to the peptide chain termination codons UAG and UAA. The sequence is that of Peptide chain release factor 1 from Salmonella agona (strain SL483).